The sequence spans 78 residues: U-scoloptoxin(15)-Ssm2a (78 aa).

Residues 1-23 (MEKKIIFLCFFVSLLTLPEFISS) form the signal peptide. The important for inhibition of KCNQ4 stretch occupies residues 34–37 (PEKK). Intrachain disulfides connect C44-C70 and C48-C72.

The protein belongs to the SLPTX(15) family. Expressed by the venom gland.

It is found in the secreted. This chain is U-scoloptoxin(15)-Ssm2a, found in Scolopendra mutilans (Chinese red-headed centipede).